The primary structure comprises 1103 residues: Ubiquitin carboxyl-terminal hydrolase 7 (1103 aa).

The span at 1–11 (MNHQQQQQQQQ) shows a compositional bias: low complexity. Positions 1-40 (MNHQQQQQQQQKAGEQQLSEPEDMEMEAGDTDDPPRITQN) are disordered. The tract at residues 1–209 (MNHQQQQQQQ…APHGVAWDSK (209 aa)) is interaction with TSPYL5. Serine 19 is subject to Phosphoserine. A compositionally biased stretch (acidic residues) spans 20 to 32 (EPEDMEMEAGDTD). Phosphoserine occurs at positions 50 and 54. Residues 54-209 (SNAEEDMEDD…APHGVAWDSK (156 aa)) are interaction with p53/TP53 and MDM2. In terms of domain architecture, MATH spans 69-196 (EATFQFTVER…DDKVTFEVFV (128 aa)). The interval 71 to 206 (TFQFTVERFS…QADAPHGVAW (136 aa)) is necessary for nuclear localization. Residues 215 to 522 (VGLKNQGATC…NAYMLVYIRE (308 aa)) enclose the USP domain. The active-site Nucleophile is cysteine 224. Catalysis depends on histidine 465, which acts as the Proton acceptor. At lysine 870 the chain carries N6-acetyllysine; alternate. A Glycyl lysine isopeptide (Lys-Gly) (interchain with G-Cter in SUMO2); alternate cross-link involves residue lysine 870. Residue lysine 870 forms a Glycyl lysine isopeptide (Lys-Gly) (interchain with G-Cter in ubiquitin); alternate linkage. Lysine 883 is covalently cross-linked (Glycyl lysine isopeptide (Lys-Gly) (interchain with G-Cter in SUMO2)). A Phosphoserine modification is found at serine 964. N6-acetyllysine is present on residues lysine 1085 and lysine 1097.

The protein belongs to the peptidase C19 family. As to quaternary structure, monomer. Homodimer. Part of a complex with DAXX, MDM2, RASSF1 and USP7. Part of a complex with DAXX, MDM2 and USP7. Interacts with MDM2; the interaction is independent of p53/TP53. Interacts with DAXX; the interaction is direct and independent of MDM2 and p53/TP53. Component of a complex composed of KMT2E, OGT and USP7; the complex stabilizes KMT2E, preventing KMT2E ubiquitination and proteasomal-mediated degradation. Interacts (via MATH domain) with KMT2E. Interacts with OGT. Interacts with FOXO4; the interaction is enhanced in presence of hydrogen peroxide and occurs independently of p53/TP53. Interacts with p53/TP53; the interaction is enhanced in response to DNA damage; the interaction is impaired by TSPYL5. Interacts with PTEN; the interaction is direct. Interacts with ATXN1 and the strength of interaction is influenced by the length of the poly-Gln region in ATXN1. A weaker interaction seen with mutants having longer poly-Gln regions. Interacts with KIAA1530/UVSSA. Interacts with MEX3C and antagonizes its ability to degrade mRNA. Interacts with DNMT1 and UHRF1. Interacts with FOXP3. Interacts (via MATH domain) with RNF220. Associated component of the Polycomb group (PcG) multiprotein PRC1-like complex. Interacts with EPOP. Interacts with OTUD4 and USP9X; the interaction is direct. Interacts with CRY2. Interacts with REST. Interacts with ERCC6. Part of a complex consisting of USP7, MAGEL2 and TRIM27; directly interacts with MAGEL2; directly interacts with TRIM27. Post-translationally, polyneddylated. Not sumoylated. In terms of processing, ubiquitinated at Lys-870. Polyubiquitinated. Strongly expressed in the testis, spleen and brain. Weakly expressed in the stomach, small intestine, skeletal muscle and uterus.

Its subcellular location is the nucleus. It is found in the cytoplasm. The protein localises to the PML body. It localises to the chromosome. It carries out the reaction Thiol-dependent hydrolysis of ester, thioester, amide, peptide and isopeptide bonds formed by the C-terminal Gly of ubiquitin (a 76-residue protein attached to proteins as an intracellular targeting signal).. Functionally, hydrolase that deubiquitinates target proteins such as ARMC5, FOXO4, DEPTOR, KAT5, p53/TP53, MDM2, ERCC6, DNMT1, UHRF1, PTEN, KMT2E/MLL5 and DAXX. Together with DAXX, prevents MDM2 self-ubiquitination and enhances the E3 ligase activity of MDM2 towards p53/TP53, thereby promoting p53/TP53 ubiquitination and proteasomal degradation. Deubiquitinates p53/TP53, preventing degradation of p53/TP53, and enhances p53/TP53-dependent transcription regulation, cell growth repression and apoptosis. Deubiquitinates p53/TP53 and MDM2 and strongly stabilizes p53/TP53 even in the presence of excess MDM2, and also induces p53/TP53-dependent cell growth repression and apoptosis. Deubiquitination of FOXO4 in presence of hydrogen peroxide is not dependent on p53/TP53 and inhibits FOXO4-induced transcriptional activity. In association with DAXX, is involved in the deubiquitination and translocation of PTEN from the nucleus to the cytoplasm, both processes that are counteracted by PML. Deubiquitinates KMT2E preventing KMT2E proteasomal-mediated degradation. Involved in cell proliferation during early embryonic development. Involved in transcription-coupled nucleotide excision repair (TC-NER) in response to UV damage: recruited to DNA damage sites following interaction with KIAA1530/UVSSA and promotes deubiquitination of ERCC6, preventing UV-induced degradation of ERCC6. Involved in maintenance of DNA methylation via its interaction with UHRF1 and DNMT1: acts by mediating deubiquitination of UHRF1 and DNMT1, preventing their degradation and promoting DNA methylation by DNMT1. Deubiquitinates alkylation repair enzyme ALKBH3. OTUD4 recruits USP7 and USP9X to stabilize ALKBH3, thereby promoting the repair of alkylated DNA lesions. Acts as a chromatin regulator via its association with the Polycomb group (PcG) multiprotein PRC1-like complex; may act by deubiquitinating components of the PRC1-like complex. Able to mediate deubiquitination of histone H2B; it is however unsure whether this activity takes place in vivo. Exhibits a preference towards 'Lys-48'-linked ubiquitin chains. Increases regulatory T-cells (Treg) suppressive capacity by deubiquitinating and stabilizing transcription factor FOXP3 which is crucial for Treg cell function. Plays a role in the maintenance of the circadian clock periodicity via deubiquitination and stabilization of the CRY1 and CRY2 proteins. Deubiquitinates REST, thereby stabilizing REST and promoting the maintenance of neural progenitor cells. Deubiquitinates SIRT7, inhibiting SIRT7 histone deacetylase activity and regulating gluconeogenesis. Involved in the regulation of WASH-dependent actin polymerization at the surface of endosomes and the regulation of endosomal protein recycling. It maintains optimal WASH complex activity and precise F-actin levels via deubiquitination of TRIM27 and WASHC1. Mediates the deubiquitination of phosphorylated DEPTOR, promoting its stability and leading to decreased mTORC1 signaling. This chain is Ubiquitin carboxyl-terminal hydrolase 7 (Usp7), found in Rattus norvegicus (Rat).